We begin with the raw amino-acid sequence, 511 residues long: Cytochrome P450 26B1 (511 aa).

Position 440 (Cys440) interacts with heme.

Belongs to the cytochrome P450 family. Requires heme as cofactor.

Its subcellular location is the endoplasmic reticulum membrane. It is found in the microsome membrane. It carries out the reaction all-trans-retinoate + reduced [NADPH--hemoprotein reductase] + O2 = all-trans-4-hydroxyretinoate + oxidized [NADPH--hemoprotein reductase] + H2O + H(+). It catalyses the reaction all-trans-retinoate + reduced [NADPH--hemoprotein reductase] + O2 = all-trans-18-hydroxyretinoate + oxidized [NADPH--hemoprotein reductase] + H2O + H(+). Functionally, a cytochrome P450 monooxygenase involved in the metabolism of retinoates (RAs), the active metabolites of vitamin A, and critical signaling molecules in animals. RAs exist as at least four different isomers: all-trans-RA (atRA), 9-cis-RA, 13-cis-RA, and 9,13-dicis-RA, where atRA is considered to be the biologically active isomer, although 9-cis-RA and 13-cis-RA also have activity. Catalyzes the hydroxylation of atRA primarily at C-4 and C-18, thereby contributing to the regulation of atRA homeostasis and signaling. Hydroxylation of atRA limits its biological activity and initiates a degradative process leading to its eventual elimination. Involved in the convertion of atRA to all-trans-4-oxo-RA. Can oxidize all-trans-13,14-dihydroretinoate (DRA) to metabolites which could include all-trans-4-oxo-DRA, all-trans-4-hydroxy-DRA, all-trans-5,8-epoxy-DRA, and all-trans-18-hydroxy-DRA. Plays a role in skeletal development, both at the level of patterning and in the ossification of bone and the establishment of some synovial joints. The sequence is that of Cytochrome P450 26B1 from Danio rerio (Zebrafish).